The following is a 293-amino-acid chain: Elongation factor Ts (293 aa).

Residues 80–83 (TDFV) form an involved in Mg(2+) ion dislocation from EF-Tu region.

Belongs to the EF-Ts family.

It is found in the cytoplasm. Functionally, associates with the EF-Tu.GDP complex and induces the exchange of GDP to GTP. It remains bound to the aminoacyl-tRNA.EF-Tu.GTP complex up to the GTP hydrolysis stage on the ribosome. This Burkholderia vietnamiensis (strain G4 / LMG 22486) (Burkholderia cepacia (strain R1808)) protein is Elongation factor Ts.